The chain runs to 247 residues: 5'-nucleotidase SurE (247 aa).

The a divalent metal cation site is built by Asp8, Asp9, Ser39, and Asn91.

It belongs to the SurE nucleotidase family. A divalent metal cation is required as a cofactor.

It localises to the cytoplasm. It catalyses the reaction a ribonucleoside 5'-phosphate + H2O = a ribonucleoside + phosphate. Functionally, nucleotidase that shows phosphatase activity on nucleoside 5'-monophosphates. The chain is 5'-nucleotidase SurE from Ruthia magnifica subsp. Calyptogena magnifica.